Consider the following 100-residue polypeptide: Co-chaperonin GroES (100 aa).

Belongs to the GroES chaperonin family. In terms of assembly, heptamer of 7 subunits arranged in a ring. Interacts with the chaperonin GroEL.

The protein localises to the cytoplasm. Its function is as follows. Together with the chaperonin GroEL, plays an essential role in assisting protein folding. The GroEL-GroES system forms a nano-cage that allows encapsulation of the non-native substrate proteins and provides a physical environment optimized to promote and accelerate protein folding. GroES binds to the apical surface of the GroEL ring, thereby capping the opening of the GroEL channel. This Mycolicibacterium paratuberculosis (strain ATCC BAA-968 / K-10) (Mycobacterium paratuberculosis) protein is Co-chaperonin GroES.